The following is a 655-amino-acid chain: NACHT, LRR and PYD domains-containing protein 10 (655 aa).

A Pyrin domain is found at 1–96 (MAMAKARKPR…VDQLSHICLH (96 aa)). The NACHT domain occupies 167–484 (SLVVLQGSAG…AMSYLVKEDQ (318 aa)). 173-180 (GSAGTGKT) lines the ATP pocket. Over residues 597–609 (QSQNLFSVKSSLS) the composition is skewed to polar residues. The interval 597–655 (QSQNLFSVKSSLSHGPKEEQKCPSVHGQKEGKDNIAGTQKEASTGKGRGTEETPKNTYI) is disordered. 2 stretches are compositionally biased toward basic and acidic residues: residues 611-629 (GPKE…EGKD) and 644-655 (RGTEETPKNTYI).

This sequence belongs to the NLRP family. As to quaternary structure, oligomerizes. Interacts with PYCARD. Also interacts with CASP1 and IL1B. Interacts with NOD1 and components of the NOD1 signaling pathway including RIPK2, NR2C2/TAK1 and IKBKG/NEMO. In terms of tissue distribution, highly expressed in basal and suprabasal epidermal cell layers with lower levels in dermal fibroblast cells (at protein level). Widely expressed with highest levels in heart, brain and skeletal muscle. Also expressed in liver, colon, dermis and epidermis. Little expression detected in myeloid cells or peripheral blood mononuclear cells.

The protein localises to the cytoplasm. It localises to the cell membrane. Functionally, inhibits autoprocessing of CASP1, CASP1-dependent IL1B secretion, PYCARD aggregation and PYCARD-mediated apoptosis but not apoptosis induced by FAS or BID. Displays anti-inflammatory activity. Required for immunity against C.albicans infection. Involved in the innate immune response by contributing to pro-inflammatory cytokine release in response to invasive bacterial infection. Contributes to T-cell-mediated inflammatory responses in the skin. Plays a role in protection against periodontitis through its involvement in induction of IL1A via ERK activation in oral epithelial cells infected with periodontal pathogens. Exhibits both ATPase and GTPase activities. In Homo sapiens (Human), this protein is NACHT, LRR and PYD domains-containing protein 10 (NLRP10).